The chain runs to 198 residues: Thymidine kinase (198 aa).

Residues 15–22 (GCMFSGKT) and 87–90 (DEAQ) contribute to the ATP site. Glu88 functions as the Proton acceptor in the catalytic mechanism. The Zn(2+) site is built by Cys144, Cys147, Cys182, and His185.

It belongs to the thymidine kinase family. Homotetramer.

The protein resides in the cytoplasm. It catalyses the reaction thymidine + ATP = dTMP + ADP + H(+). The sequence is that of Thymidine kinase from Coprothermobacter proteolyticus (strain ATCC 35245 / DSM 5265 / OCM 4 / BT).